The following is a 443-amino-acid chain: Probable glucomannan 4-beta-mannosyltransferase 11 (443 aa).

Asp52 is an active-site residue. Positions 111 and 113 each coordinate substrate. Residue Asp205 is part of the active site. Helical transmembrane passes span 284-304 (IIVH…SVFF), 321-341 (ITLF…FWVL), 400-420 (EMMV…FGKT), and 421-441 (VLYI…IGFI).

The protein belongs to the glycosyltransferase 2 family. Plant cellulose synthase-like A subfamily.

The protein localises to the golgi apparatus membrane. It carries out the reaction GDP-mannose + (glucomannan)n = GDP + (glucomannan)n+1.. Probable mannan synthase which consists of a 4-beta-mannosyltransferase activity on mannan using GDP-mannose. The beta-1,4-mannan product is the backbone for galactomannan synthesis by galactomannan galactosyltransferase. Galactomannan is a noncellulosic polysaccharides of plant cell wall. In Arabidopsis thaliana (Mouse-ear cress), this protein is Probable glucomannan 4-beta-mannosyltransferase 11.